The chain runs to 97 residues: Citrate lyase acyl carrier protein (97 aa).

At Ser14 the chain carries O-(phosphoribosyl dephospho-coenzyme A)serine.

Belongs to the CitD family. In terms of assembly, oligomer with a subunit composition of (alpha,beta,gamma)6.

The protein resides in the cytoplasm. In terms of biological role, covalent carrier of the coenzyme of citrate lyase. In Leuconostoc citreum (strain KM20), this protein is Citrate lyase acyl carrier protein.